Consider the following 354-residue polypeptide: Protein-arginine kinase (354 aa).

In terms of domain architecture, Phosphagen kinase C-terminal spans 24 to 254 (IVLSSRIRLA…QQIIHQEKTA (231 aa)). ATP contacts are provided by residues 27–31 (SSRIR), His92, Arg125, 176–180 (RASVM), and 207–212 (RGIYGE). The RDXXRA motif of the pArg binding pocket involved in allosteric regulation signature appears at 337-342 (RDYRRA).

It belongs to the ATP:guanido phosphotransferase family.

It catalyses the reaction L-arginyl-[protein] + ATP = N(omega)-phospho-L-arginyl-[protein] + ADP + H(+). With respect to regulation, appears to be allosterically activated by the binding of pArg-containing polypeptides to the pArg-binding pocket localized in the C-terminal domain of McsB. Catalyzes the specific phosphorylation of arginine residues in a large number of proteins. Is part of the bacterial stress response system. Protein arginine phosphorylation has a physiologically important role and is involved in the regulation of many critical cellular processes, such as protein homeostasis, motility, competence, and stringent and stress responses, by regulating gene expression and protein activity. In Bacillus mycoides (strain KBAB4) (Bacillus weihenstephanensis), this protein is Protein-arginine kinase.